A 267-amino-acid chain; its full sequence is 4-hydroxy-tetrahydrodipicolinate reductase (267 aa).

NAD(+)-binding positions include 9 to 14 (GASGRM) and Asp-35. Position 36 (Arg-36) interacts with NADP(+). Residues 98–100 (GTT) and 122–125 (ASNF) contribute to the NAD(+) site. His-155 acts as the Proton donor/acceptor in catalysis. (S)-2,3,4,5-tetrahydrodipicolinate is bound at residue His-156. Catalysis depends on Lys-159, which acts as the Proton donor. Residue 165-166 (GT) coordinates (S)-2,3,4,5-tetrahydrodipicolinate.

This sequence belongs to the DapB family.

The protein localises to the cytoplasm. It catalyses the reaction (S)-2,3,4,5-tetrahydrodipicolinate + NAD(+) + H2O = (2S,4S)-4-hydroxy-2,3,4,5-tetrahydrodipicolinate + NADH + H(+). It carries out the reaction (S)-2,3,4,5-tetrahydrodipicolinate + NADP(+) + H2O = (2S,4S)-4-hydroxy-2,3,4,5-tetrahydrodipicolinate + NADPH + H(+). It functions in the pathway amino-acid biosynthesis; L-lysine biosynthesis via DAP pathway; (S)-tetrahydrodipicolinate from L-aspartate: step 4/4. Its function is as follows. Catalyzes the conversion of 4-hydroxy-tetrahydrodipicolinate (HTPA) to tetrahydrodipicolinate. The protein is 4-hydroxy-tetrahydrodipicolinate reductase of Chromobacterium violaceum (strain ATCC 12472 / DSM 30191 / JCM 1249 / CCUG 213 / NBRC 12614 / NCIMB 9131 / NCTC 9757 / MK).